Consider the following 449-residue polypeptide: Integrator complex subunit 15 (449 aa).

The protein belongs to the Integrator subunit 15 family. Component of the Integrator complex, composed of core subunits INTS1, INTS2, INTS3, INTS4, INTS5, INTS6, INTS7, INTS8, INTS9/RC74, INTS10, INTS11/CPSF3L, INTS12, INTS13, INTS14 and INTS15. The core complex associates with protein phosphatase 2A subunits PPP2CA and PPP2R1A, to form the Integrator-PP2A (INTAC) complex. INTS15 is part of the tail subcomplex, composed of INTS10, INTS13, INTS14 and INTS15.

The protein resides in the nucleus. It is found in the chromosome. Its function is as follows. Component of the integrator complex, a multiprotein complex that terminates RNA polymerase II (Pol II) transcription in the promoter-proximal region of genes. The integrator complex provides a quality checkpoint during transcription elongation by driving premature transcription termination of transcripts that are unfavorably configured for transcriptional elongation: the complex terminates transcription by (1) catalyzing dephosphorylation of the C-terminal domain (CTD) of Pol II subunit POLR2A/RPB1 and SUPT5H/SPT5, (2) degrading the exiting nascent RNA transcript via endonuclease activity and (3) promoting the release of Pol II from bound DNA. The integrator complex is also involved in terminating the synthesis of non-coding Pol II transcripts, such as enhancer RNAs (eRNAs), small nuclear RNAs (snRNAs), telomerase RNAs and long non-coding RNAs (lncRNAs). INTS15 is part of the integrator tail module that acts as a platform for the recruitment of transcription factors at promoters. Within the integrator complex, INTS15 is required to bridge different integrator modules. The chain is Integrator complex subunit 15 from Homo sapiens (Human).